We begin with the raw amino-acid sequence, 268 residues long: Virulence plasmid ParA family protein pGP5-D (268 aa).

Residue 13-20 coordinates ATP; the sequence is FKGGTGKT.

It belongs to the ParA family.

This chain is Virulence plasmid ParA family protein pGP5-D, found in Chlamydia muridarum (strain MoPn / Nigg).